Here is a 162-residue protein sequence, read N- to C-terminus: Disulfide bond formation protein B (162 aa).

Over 1–8 (MTPLFRKA) the chain is Cytoplasmic. Residues 9 to 25 (VWLLFAVSVCAFAGSLA) form a helical membrane-spanning segment. Residues 26–43 (AQYVLGMEPCVLCISQRL) lie on the Periplasmic side of the membrane. The cysteines at positions 35 and 38 are disulfide-linked. A helical transmembrane segment spans residues 44–60 (CVLATALCAAVVLACKP). The Cytoplasmic segment spans residues 61–67 (KGRVGGL). A helical membrane pass occupies residues 68 to 85 (SGAVFISIPAVTGISVAA). Residues 86 to 141 (YQLWLQSLPPGAAPSCGAPWTFRLKGWPLFDWFEPVVRGFGNCAEPDYLLGVALPV) lie on the Periplasmic side of the membrane. C101 and C128 are joined by a disulfide. A helical transmembrane segment spans residues 142 to 160 (WSAAYFLAVVLTVWWAWAR). Over 161 to 162 (AK) the chain is Cytoplasmic.

This sequence belongs to the DsbB family.

The protein resides in the cell inner membrane. Its function is as follows. Required for disulfide bond formation in some periplasmic proteins. Acts by oxidizing the DsbA protein. This Neisseria gonorrhoeae (strain ATCC 700825 / FA 1090) protein is Disulfide bond formation protein B.